The primary structure comprises 687 residues: Fork-head transcriptional regulator 2 (687 aa).

The tract at residues 1-23 (MSAQFITPKKRPHSPLDSNELLP) is disordered. The FHA domain occupies 82–146 (VSIGRNIELS…NGARIDGQKV (65 aa)). A compositionally biased stretch (polar residues) spans 226-241 (SPSSISANSLQSNLDQ). The interval 226–246 (SPSSISANSLQSNLDQDLSKE) is disordered. The fork-head DNA-binding region spans 252-350 (KPPYSYATMI…SDGTISKTRR (99 aa)). Disordered regions lie at residues 385–449 (AASI…RYTP), 472–569 (QLGR…IGLN), and 584–687 (PERG…MIDS). Over residues 389–410 (PQQQKQQQQQQKRPPQQQNSQP) the composition is skewed to low complexity. The segment covering 411 to 442 (HLSQPHYTIPSNPMQTNSMGYIPQSNIYNMSN) has biased composition (polar residues). Positions 472-490 (QLGRPQGQLGQPMMQPQQQ) are enriched in low complexity. Positions 491 to 540 (SYTSSNIKTEPSSPKRNPSISNNTPKMAKGTVSTESHSRSTSYTTTQLHE) are enriched in polar residues. Low complexity-rich tracts occupy residues 542-563 (SNFNSSANDSTSTAPTASTTTN) and 589-624 (KGNPSGTNNNNNTNNTNTNTTNNNNGKNTAGGPNTN). Over residues 625-659 (QSSPAFWNFVQFSTPNGQSPVRKSSEEVGNNSPTL) the composition is skewed to polar residues. A Nuclear localization signal motif is present at residues 663-670 (IKREREND).

It localises to the nucleus. Transcription factor required for the morphogenesis of true hyphal as well as yeast cells. Contributes to virulence. In Candida albicans (strain SC5314 / ATCC MYA-2876) (Yeast), this protein is Fork-head transcriptional regulator 2 (FKH2).